A 259-amino-acid chain; its full sequence is Small ribosomal subunit protein eS1 (259 aa).

The segment covering 1 to 18 (MAVGKNKRISKGKKGGKK) has biased composition (basic residues). Residues 1–22 (MAVGKNKRISKGKKGGKKKASD) form a disordered region.

Belongs to the eukaryotic ribosomal protein eS1 family. Component of the small ribosomal subunit. Mature ribosomes consist of a small (40S) and a large (60S) subunit. The 40S subunit contains about 33 different proteins and 1 molecule of RNA (18S). The 60S subunit contains about 49 different proteins and 3 molecules of RNA (25S, 5.8S and 5S).

The protein localises to the cytoplasm. In Chlamydomonas reinhardtii (Chlamydomonas smithii), this protein is Small ribosomal subunit protein eS1.